We begin with the raw amino-acid sequence, 140 residues long: Nucleoside diphosphate kinase (140 aa).

Positions 10, 58, 86, 92, 103, and 113 each coordinate ATP. The active-site Pros-phosphohistidine intermediate is histidine 116.

This sequence belongs to the NDK family. In terms of assembly, homotetramer. Mg(2+) serves as cofactor.

The protein localises to the cytoplasm. The enzyme catalyses a 2'-deoxyribonucleoside 5'-diphosphate + ATP = a 2'-deoxyribonucleoside 5'-triphosphate + ADP. It catalyses the reaction a ribonucleoside 5'-diphosphate + ATP = a ribonucleoside 5'-triphosphate + ADP. Functionally, major role in the synthesis of nucleoside triphosphates other than ATP. The ATP gamma phosphate is transferred to the NDP beta phosphate via a ping-pong mechanism, using a phosphorylated active-site intermediate. The sequence is that of Nucleoside diphosphate kinase from Haemophilus influenzae (strain PittEE).